A 601-amino-acid polypeptide reads, in one-letter code: Deoxyhypusine synthase (601 aa).

NAD(+)-binding positions include 109–113 and 184–186; these read ANLMG and SGG. Position 189–190 (189–190) interacts with spermidine; the sequence is EH. Positions 210 to 242 are disordered; that stretch reads GHVSSTVSSEATAPPKGLQQRAEKPLGTRAAAG. Residues 211 to 220 show a composition bias toward polar residues; sequence HVSSTVSSEA. Asp398 serves as a coordination point for NAD(+). The tract at residues 411 to 451 is disordered; it reads PAARPAHRKGGPVADENAGNSKELKRSRKASSSSSTSATAV. The segment covering 440–451 has biased composition (low complexity); the sequence is ASSSSSTSATAV. Gly489 is a binding site for NAD(+). His494 is a binding site for spermidine. NAD(+) is bound at residue 514 to 515; that stretch reads NG. Residues 520–522 and 529–535 each bind spermidine; these read GSD and EALSWGK. Lys535 (nucleophile) is an active-site residue. 548–549 provides a ligand contact to NAD(+); it reads EV. The segment at 568–601 is disordered; it reads RRATDDAQPRRKRSSRGARPPQDVSGHSHLCRGE.

The protein belongs to the deoxyhypusine synthase family. As to quaternary structure, homodimer. It depends on NAD(+) as a cofactor.

It catalyses the reaction [eIF5A protein]-L-lysine + spermidine = [eIF5A protein]-deoxyhypusine + propane-1,3-diamine. It participates in protein modification; eIF5A hypusination. Its activity is regulated as follows. N1-guanyl-1,7-diaminoheptane has a small inhibitory effect on activity. Its function is as follows. Catalyzes the NAD-dependent oxidative cleavage of spermidine and the subsequent transfer of the butylamine moiety of spermidine to the epsilon-amino group of a specific lysine residue of the eIF-5A precursor protein to form the intermediate deoxyhypusine residue. This Leishmania donovani protein is Deoxyhypusine synthase.